We begin with the raw amino-acid sequence, 414 residues long: MVSTFSRKDQNYKNDDLNQPSIEGRFGKYGGQYVPETLMPALFELEDAASNAWKDKLFVEELNHLLKTYVGRETPLYEAKRLTEHYKNKQATPRIWLKREDLNHTGAHKINNALGQALLAIRMGKKRIIAETGAGQHGVATATVCARFGLKCIIYMGAEDIKRQSLNVFRMKLLGAEVKVVNSGTATLKDATSEAIRDWVSNVETTHYILGSVAGPHPFPKIVRDFHAVIGEETKKQCLESFGSLPDILLACVGGGSNAMGLFHPFVKETSVRLIGVEAAGSGVDTDKHAATITKGSVGILHGSMSLLLQDDNGQVQEAHSISAGLDYPGVGPEHSHLKDIGRAEYGSVTDQEALDALKLVSELEGIIPALETAHAFAWLDKLCPTLEKDTNIVINCSGRGDKDVNTVASSLDI.

Lys109 bears the N6-(pyridoxal phosphate)lysine mark.

The protein belongs to the TrpB family. Tetramer of two alpha and two beta chains. Pyridoxal 5'-phosphate is required as a cofactor.

The enzyme catalyses (1S,2R)-1-C-(indol-3-yl)glycerol 3-phosphate + L-serine = D-glyceraldehyde 3-phosphate + L-tryptophan + H2O. It participates in amino-acid biosynthesis; L-tryptophan biosynthesis; L-tryptophan from chorismate: step 5/5. Its function is as follows. The beta subunit is responsible for the synthesis of L-tryptophan from indole and L-serine. This chain is Tryptophan synthase beta chain, found in Prochlorococcus marinus (strain AS9601).